The sequence spans 439 residues: Protein PHYTOCHROME KINASE SUBSTRATE 1 (439 aa).

Positions 1-14 (MVTLTPSSASTPKT) are enriched in polar residues. Disordered regions lie at residues 1 to 22 (MVTL…MKNN), 54 to 80 (KTLN…APED), and 100 to 139 (QGSS…SSWN). The span at 63–79 (KQEEFGDEKKMVKKAPE) shows a compositional bias: basic and acidic residues. 2 stretches are compositionally biased toward polar residues: residues 100-109 (QGSSVLSLTN) and 118-139 (DSKQ…SSWN). Residues Ser-238 and Ser-244 each carry the phosphoserine modification. Disordered stretches follow at residues 259–311 (LPLP…PTCY) and 355–439 (TAKS…LYSQ). Over residues 412-421 (TKPKSFETRR) the composition is skewed to basic and acidic residues. Residues 424-439 (SNSSISHTQSSLLYSQ) show a composition bias toward low complexity.

It belongs to the PKS family. In terms of assembly, interacts with PKS2, RPT3, PHOT1, PHOT2 and the C-termini of both phytochromes A (phyA) and B (phyB). Binds both spectral forms of phytochrome, Pr and Pfr. Phosphorylated on Ser and to a lower extent on Thr by phytochromes. Phosphorylation is stimulated twofold by red light. Expressed in young seedlings in both darkness and light. Moderate in leaves and very low in roots and flowers. Expressed in the elongation zone of the root and hypocotyl.

Its subcellular location is the cell membrane. May be responsible for light-regulated cytoplasmic sequestration of phytochromes or may be a negative regulator of phytochrome B signaling. Component of the network that modulates the very low-fluence response (VLFR) branch of phyA signaling. Acts positively in PHOT1 signaling. Regulates phytochrome-mediated photomorphogenesis and hypocotyl phototropism. Involved in the control of leaf flattening and leaf positioning. Promotes negative root phototropism and negatively regulates root gravitropism. May act by controlling auxin homeostasis. The chain is Protein PHYTOCHROME KINASE SUBSTRATE 1 (PKS1) from Arabidopsis thaliana (Mouse-ear cress).